The chain runs to 200 residues: 3-isopropylmalate dehydratase small subunit (200 aa).

It belongs to the LeuD family. LeuD type 1 subfamily. Heterodimer of LeuC and LeuD.

It catalyses the reaction (2R,3S)-3-isopropylmalate = (2S)-2-isopropylmalate. It functions in the pathway amino-acid biosynthesis; L-leucine biosynthesis; L-leucine from 3-methyl-2-oxobutanoate: step 2/4. Functionally, catalyzes the isomerization between 2-isopropylmalate and 3-isopropylmalate, via the formation of 2-isopropylmaleate. In Histophilus somni (strain 129Pt) (Haemophilus somnus), this protein is 3-isopropylmalate dehydratase small subunit.